A 623-amino-acid polypeptide reads, in one-letter code: Pentatricopeptide repeat-containing protein At5g15340, mitochondrial (623 aa).

The transit peptide at 1–16 (MKCLSYQKVRLLLRHC) directs the protein to the mitochondrion. PPR repeat units lie at residues 42 to 72 (RSYL…IPLS), 75 to 109 (DNVD…RVEI), 110 to 144 (DDVS…GVLT), 145 to 179 (SVKV…SVVS), 180 to 206 (WTVV…MPER), 207 to 237 (NAVA…MVFR), 243 to 277 (NFVT…EMMM), 285 to 319 (DVMV…NVVT), 320 to 346 (WNAL…MIRE), 350 to 384 (DDLT…GLEP), and 385 to 419 (KVDH…PNEV). Residues 420–495 (VLGSLLGSCS…IPGLSSIYVN (76 aa)) are type E motif. The tract at residues 496-526 (DSVHRFSSGDRSHPRTKEIYLKLNEVIERIR) is type E(+) motif. The tract at residues 527–623 (SAGYVPDVSG…GGSCSCSDYW (97 aa)) is type DYW motif.

This sequence belongs to the PPR family. PCMP-H subfamily.

The protein localises to the mitochondrion. This is Pentatricopeptide repeat-containing protein At5g15340, mitochondrial (PCMP-H91) from Arabidopsis thaliana (Mouse-ear cress).